Consider the following 750-residue polypeptide: GRIP and coiled-coil domain-containing protein C27D7.02c (750 aa).

Disordered stretches follow at residues 14 to 53 and 188 to 280; these read AQGQ…AKNM and KTVE…RDIA. Basic and acidic residues-rich tracts occupy residues 18–34 and 188–198; these read EEAK…DQLR and KTVETKNDVPE. Residues 28–182 adopt a coiled-coil conformation; sequence QEEDQLRRNN…AQSIEQEVIS (155 aa). Residues 201-213 show a composition bias toward polar residues; sequence RPSTDTIGVSSAL. Residues 213–243 are a coiled coil; that stretch reads LSKKKKKRNRKNQKKKSTKQNIEATTENDAL. Over residues 214 to 230 the composition is skewed to basic residues; that stretch reads SKKKKKRNRKNQKKKST. The span at 233-251 shows a compositional bias: polar residues; that stretch reads NIEATTENDALSESISTPD. Residues 269 to 280 show a composition bias toward basic and acidic residues; that stretch reads ADSKEEERRDIA. Positions 344–665 form a coiled coil; it reads KLVEELTKQL…YEHLQKSFKN (322 aa). The segment at 672-703 is disordered; that stretch reads KQQPSNHGRNSSVSRSSSSVEVNSKHPGSDDM. Residues 676 to 693 are compositionally biased toward low complexity; the sequence is SNHGRNSSVSRSSSSVEV. Basic and acidic residues predominate over residues 694 to 703; that stretch reads NSKHPGSDDM. The GRIP domain occupies 700–748; that stretch reads SDDMLIDKEYTRNILFQFLEQRDRRPEIVNLLSILLDLSEEQKQKLLSV.

It is found in the cytoplasm. This Schizosaccharomyces pombe (strain 972 / ATCC 24843) (Fission yeast) protein is GRIP and coiled-coil domain-containing protein C27D7.02c.